Reading from the N-terminus, the 146-residue chain is Large-conductance mechanosensitive channel (146 aa).

A run of 3 helical transmembrane segments spans residues 21 to 41 (VGII…ADLI), 44 to 64 (VIGL…LGDG), and 83 to 103 (GAFI…FLLV).

This sequence belongs to the MscL family. Homopentamer.

It localises to the cell inner membrane. In terms of biological role, channel that opens in response to stretch forces in the membrane lipid bilayer. May participate in the regulation of osmotic pressure changes within the cell. This Cereibacter sphaeroides (strain ATCC 17025 / ATH 2.4.3) (Rhodobacter sphaeroides) protein is Large-conductance mechanosensitive channel.